The following is a 573-amino-acid chain: Urease subunit alpha (573 aa).

One can recognise a Urease domain in the interval 136-573 (GAIDCHVHFI…LPMAQRYFLF (438 aa)). H141, H143, and K224 together coordinate Ni(2+). K224 is subject to N6-carboxylysine. Substrate is bound at residue H226. Ni(2+) is bound by residues H253 and H279. H327 serves as the catalytic Proton donor. D367 is a binding site for Ni(2+).

It belongs to the metallo-dependent hydrolases superfamily. Urease alpha subunit family. In terms of assembly, heterotrimer of UreA (gamma), UreB (beta) and UreC (alpha) subunits. Three heterotrimers associate to form the active enzyme. The cofactor is Ni cation. Post-translationally, carboxylation allows a single lysine to coordinate two nickel ions.

It is found in the cytoplasm. The catalysed reaction is urea + 2 H2O + H(+) = hydrogencarbonate + 2 NH4(+). It functions in the pathway nitrogen metabolism; urea degradation; CO(2) and NH(3) from urea (urease route): step 1/1. The polypeptide is Urease subunit alpha (Nocardia farcinica (strain IFM 10152)).